We begin with the raw amino-acid sequence, 196 residues long: Calcium channel flower (196 aa).

The next 3 membrane-spanning stretches (helical) occupy residues 36-56, 67-89, and 114-134; these read LGIV…LSII, IIQM…ICIE, and AVPP…GLIF.

The protein belongs to the calcium channel flower family. Homomultimer. Associates with the dally/ magu complex.

The protein resides in the cell membrane. It localises to the cytoplasmic vesicle. It is found in the secretory vesicle. The protein localises to the synaptic vesicle membrane. Its subcellular location is the presynaptic cell membrane. The protein resides in the endosome. Its activity is regulated as follows. Channel activity is inhibited by La(3+), which reduces Ca(2+) influx and thus inhibits it's function in promoting activity-dependent bulk endocytosis (ADBE) in response to high stimuli. In terms of biological role, transmembrane protein which mediates synaptic endocytosis, fitness-based cell culling, neuronal culling, morphogen gradient scaling, and calcium transport. Regulates synaptic endocytosis and hence couples exo- with endocytosis. Controls two major modes of synaptic vesicle (SV) endocytosis in the synaptic boutons of neuromuscular junctions (NMJs); Ca(2+) channel-independent Clathrin-mediated endocytosis (CME) in response to mild stimulation, and Ca(2+) channel-dependent activity-dependent bulk endocytosis (ADBE) in response to strong stimulation. Functions in ADBE and subsequent SV reformation from bulk endosomes by initiating Ca(2+) channel-dependent phosphatidylinositol 4,5-bisphosphate (PtdIns(4,5)P2) compartmentalization in synaptic boutons. There it acts at the periactive zone to provide the low Ca(2+) levels required to initiate Calcineurin activation and upregulate PtdIns(4,5)P2. Conversely PtdIns(4,5)P2 enhances fwe Ca(2+) channel-activity, establishing a positive feedback loop that induces PtdIns(4,5)P2 microdomain at the periactive zone. These microdomains trigger bulk membrane invagination (i.e. ADBE) by triggering actin polymerization while also promoting localization of fwe to bulk endosomes, thereby removing the ADBE trigger to reduce endocytosis and prevent excess membrane uptake. PtdIns(4,5)P2 then promotes SV reformation from the bulk endosomes, to coordinate ADBE and subsequent SV reformation. Different combinations of the flower isoforms at the cell membrane are also required for the identification and elimination of suboptimal or supernumerary cells during development, regeneration, and adulthood. Required for the recognition and elimination of unfit cells in the developing wing during cell competition. In the developing pupal retina, mediates the elimination of unwanted postmitotic neurons, including supernumerary photoreceptor neurons that form at the periphery of the retina and are contained within incomplete ommatidia units. Also required for efficient elimination and replacement of old neurons by newly generated neurons during regeneration in the adult brain following mechanical injury. Downstream of the flower fitness fingerprints, cells identified as unwanted or unfit are eliminated via apoptosis through the expression of ahuizotl (azot). However, the cells marked for elimination by the flower isoforms only undergo apoptosis if additional thresholds are met; (1) their neighboring fit/healthy cells express different levels of the fwe isoforms, and (2) the levels of the protective signal SPARC expressed by the loser or unwanted cells are unable to inhibit caspase activation. These additional thresholds for flower-mediated apoptosis, allows useful cells to recover from transient and limited stress before they are unnecessarily eliminated. Functions with dally and magu in a mechanism of scaling, which utilises apoptosis to ensure that the dpp morphogen gradient, which mediates organ growth, remains proportional to the size of the growing wing. In this mechanism, fwe represses dally- and Magu-dependent activity in expanding the gradient, and dally/Magu inhibits fwe-dependent apoptosis to keep cell death rate low. When the levels of these different proteins are optimally regulated the gradient correctly scales with organ growth but when this fails, fwe-mediated apoptosis is activated to trim the developing tissue to match the correct size of the gradient. In Drosophila virilis (Fruit fly), this protein is Calcium channel flower.